A 349-amino-acid chain; its full sequence is Soluble TNF receptor II (349 aa).

Positions 1–19 are cleaved as a signal peptide; sequence MRSVLYSYILFLSCIIING. TNFR-Cys repeat units lie at residues 31-65 and 67-108; these read KCKD…NTQC and PCGS…NRIC. 6 cysteine pairs are disulfide-bonded: cysteine 32–cysteine 43, cysteine 44–cysteine 57, cysteine 47–cysteine 65, cysteine 68–cysteine 83, cysteine 86–cysteine 100, and cysteine 90–cysteine 108. N-linked (GlcNAc...) asparagine; by host glycosylation is found at asparagine 101, asparagine 190, asparagine 249, asparagine 277, and asparagine 313.

This sequence belongs to the orthopoxvirus OPG002 family.

Its subcellular location is the secreted. Inhibits host immune defense by binding to host TNF and various chemokines in the extracellular space. Binds host CC chemokines (beta chemokines) and CXC chemokines (alpha chemokines). In Monkeypox virus, this protein is Soluble TNF receptor II (OPG002).